The sequence spans 635 residues: Endo-1,4-beta-xylanase B (635 aa).

The GH10 domain maps to 1–337 (MNLKTAYEPY…KEAYYAVLKA (337 aa)). Glu-150 (proton donor) is an active-site residue. Glu-255 (nucleophile) is an active-site residue.

Belongs to the glycosyl hydrolase 10 (cellulase F) family.

It catalyses the reaction Endohydrolysis of (1-&gt;4)-beta-D-xylosidic linkages in xylans.. Its pathway is glycan degradation; xylan degradation. B.fibrisolvens is located in the rumen of ruminant animals, where it contributes to the animal's digestion of plant material by hydrolyzing hemicellulose with its xylanases. The sequence is that of Endo-1,4-beta-xylanase B (xynB) from Butyrivibrio fibrisolvens.